A 294-amino-acid chain; its full sequence is 4-hydroxy-tetrahydrodipicolinate synthase (294 aa).

Thr-47 is a binding site for pyruvate. Catalysis depends on Tyr-135, which acts as the Proton donor/acceptor. Residue Lys-163 is the Schiff-base intermediate with substrate of the active site. Position 205 (Val-205) interacts with pyruvate.

This sequence belongs to the DapA family. As to quaternary structure, homotetramer; dimer of dimers.

The protein resides in the cytoplasm. The enzyme catalyses L-aspartate 4-semialdehyde + pyruvate = (2S,4S)-4-hydroxy-2,3,4,5-tetrahydrodipicolinate + H2O + H(+). It participates in amino-acid biosynthesis; L-lysine biosynthesis via DAP pathway; (S)-tetrahydrodipicolinate from L-aspartate: step 3/4. Catalyzes the condensation of (S)-aspartate-beta-semialdehyde [(S)-ASA] and pyruvate to 4-hydroxy-tetrahydrodipicolinate (HTPA). This Rickettsia canadensis (strain McKiel) protein is 4-hydroxy-tetrahydrodipicolinate synthase.